Here is a 289-residue protein sequence, read N- to C-terminus: tRNA-cytidine(32) 2-sulfurtransferase (289 aa).

The short motif at 39-44 (SGGKDS) is the PP-loop motif element. [4Fe-4S] cluster-binding residues include Cys114, Cys117, and Cys205.

The protein belongs to the TtcA family. In terms of assembly, homodimer. Requires Mg(2+) as cofactor. [4Fe-4S] cluster is required as a cofactor.

Its subcellular location is the cytoplasm. The enzyme catalyses cytidine(32) in tRNA + S-sulfanyl-L-cysteinyl-[cysteine desulfurase] + AH2 + ATP = 2-thiocytidine(32) in tRNA + L-cysteinyl-[cysteine desulfurase] + A + AMP + diphosphate + H(+). It participates in tRNA modification. Its function is as follows. Catalyzes the ATP-dependent 2-thiolation of cytidine in position 32 of tRNA, to form 2-thiocytidine (s(2)C32). The sulfur atoms are provided by the cysteine/cysteine desulfurase (IscS) system. This chain is tRNA-cytidine(32) 2-sulfurtransferase, found in Deinococcus geothermalis (strain DSM 11300 / CIP 105573 / AG-3a).